A 208-amino-acid polypeptide reads, in one-letter code: Small ribosomal subunit protein uS4 (208 aa).

A disordered region spans residues 28-48; the sequence is YMERRPYGPGEHGRARKKQDS. The region spanning 95–160 is the S4 RNA-binding domain; it reads MRLDALVLRA…MPPFQVAAAG (66 aa).

It belongs to the universal ribosomal protein uS4 family. As to quaternary structure, part of the 30S ribosomal subunit. Contacts protein S5. The interaction surface between S4 and S5 is involved in control of translational fidelity.

Its function is as follows. One of the primary rRNA binding proteins, it binds directly to 16S rRNA where it nucleates assembly of the body of the 30S subunit. With S5 and S12 plays an important role in translational accuracy. The sequence is that of Small ribosomal subunit protein uS4 from Arthrobacter sp. (strain FB24).